The chain runs to 152 residues: D-aminoacyl-tRNA deacylase 1 (152 aa).

The Gly-cisPro motif, important for rejection of L-amino acids motif lies at glycine 140–proline 141.

The protein belongs to the DTD family. Homodimer.

It localises to the cytoplasm. The catalysed reaction is glycyl-tRNA(Ala) + H2O = tRNA(Ala) + glycine + H(+). It catalyses the reaction a D-aminoacyl-tRNA + H2O = a tRNA + a D-alpha-amino acid + H(+). Functionally, an aminoacyl-tRNA editing enzyme that deacylates mischarged D-aminoacyl-tRNAs. Hydrolyzes correctly charged, achiral, glycyl-tRNA(Gly). Deacylates mischarged D.melanogaster and E.coli glycyl-tRNA(Ala), protecting cells against glycine mischarging by AlaRS. Acts via tRNA-based rather than protein-based catalysis; rejects L-amino acids rather than detecting D-amino acids in the active site. By recycling D-aminoacyl-tRNA to D-amino acids and free tRNA molecules, this enzyme counteracts the toxicity associated with the formation of D-aminoacyl-tRNA entities in vivo and helps enforce protein L-homochirality. The chain is D-aminoacyl-tRNA deacylase 1 (dtd1) from Leishmania major.